Consider the following 155-residue polypeptide: Large ribosomal subunit protein uL30 (155 aa).

Belongs to the universal ribosomal protein uL30 family. Part of the 50S ribosomal subunit.

This chain is Large ribosomal subunit protein uL30, found in Pyrococcus abyssi (strain GE5 / Orsay).